The following is a 152-amino-acid chain: Nucleoside diphosphate kinase B (152 aa).

Positions 1–66 are interaction with AKAP13; sequence MANLERTFIA…DRPFFPGLVK (66 aa). Residues K12, F60, R88, T94, R105, and N115 each contribute to the ATP site. Catalysis depends on H118, which acts as the Pros-phosphohistidine intermediate.

The protein belongs to the NDK family. Hexamer of two different chains: An and B (A6, A5B, A4B2, A3B3, A2B4, AB5, B6). Interacts with CAPN8. Interacts with AKAP13. Interacts with ITGB1BP1 (via C-terminal domain region). Interacts with BCL2L10. Mg(2+) is required as a cofactor. In terms of tissue distribution, ubiquitously expressed.

The protein localises to the cytoplasm. The protein resides in the cell projection. It is found in the lamellipodium. Its subcellular location is the ruffle. It localises to the perinuclear region. The protein localises to the nucleus. It catalyses the reaction a 2'-deoxyribonucleoside 5'-diphosphate + ATP = a 2'-deoxyribonucleoside 5'-triphosphate + ADP. It carries out the reaction a ribonucleoside 5'-diphosphate + ATP = a ribonucleoside 5'-triphosphate + ADP. The enzyme catalyses ATP + protein L-histidine = ADP + protein N-phospho-L-histidine.. In terms of biological role, major role in the synthesis of nucleoside triphosphates other than ATP. The ATP gamma phosphate is transferred to the NDP beta phosphate via a ping-pong mechanism, using a phosphorylated active-site intermediate. Negatively regulates Rho activity by interacting with AKAP13/LBC. Acts as a transcriptional activator of the MYC gene; binds DNA non-specifically. Binds to both single-stranded guanine- and cytosine-rich strands within the nuclease hypersensitive element (NHE) III(1) region of the MYC gene promoter. Does not bind to duplex NHE III(1). Has G-quadruplex (G4) DNA-binding activity, which is independent of its nucleotide-binding and kinase activity. Binds both folded and unfolded G4 with similar low nanomolar affinities. Stabilizes folded G4s regardless of whether they are prefolded or not. Exhibits histidine protein kinase activity. The protein is Nucleoside diphosphate kinase B (NME2) of Homo sapiens (Human).